Here is a 281-residue protein sequence, read N- to C-terminus: 2,3,4,5-tetrahydropyridine-2,6-dicarboxylate N-succinyltransferase (281 aa).

Residues arginine 108 and aspartate 145 each coordinate substrate.

This sequence belongs to the transferase hexapeptide repeat family. In terms of assembly, homotrimer.

It localises to the cytoplasm. It carries out the reaction (S)-2,3,4,5-tetrahydrodipicolinate + succinyl-CoA + H2O = (S)-2-succinylamino-6-oxoheptanedioate + CoA. The protein operates within amino-acid biosynthesis; L-lysine biosynthesis via DAP pathway; LL-2,6-diaminopimelate from (S)-tetrahydrodipicolinate (succinylase route): step 1/3. In Nitrobacter winogradskyi (strain ATCC 25391 / DSM 10237 / CIP 104748 / NCIMB 11846 / Nb-255), this protein is 2,3,4,5-tetrahydropyridine-2,6-dicarboxylate N-succinyltransferase.